A 170-amino-acid chain; its full sequence is Acetyl-CoA decarbonylase/synthase complex subunit epsilon 2 (170 aa).

Belongs to the CdhB family. Heterotetramer of two alpha and two epsilon subunits. The ACDS complex is made up of alpha, epsilon, beta, gamma and delta subunits with a probable stoichiometry of (alpha(2)epsilon(2))(4)-beta(8)-(gamma(1)delta(1))(8).

The protein operates within one-carbon metabolism; methanogenesis from acetate. In terms of biological role, part of a complex that catalyzes the reversible cleavage of acetyl-CoA, allowing growth on acetate as sole source of carbon and energy. The alpha-epsilon subcomponent functions as a carbon monoxide dehydrogenase. The precise role of the epsilon subunit is unclear; it may have a stabilizing role within the alpha(2)epsilon(2) component and/or be involved in electron transfer to FAD during a potential FAD-mediated CO oxidation. The polypeptide is Acetyl-CoA decarbonylase/synthase complex subunit epsilon 2 (cdhB2) (Methanosarcina thermophila).